Reading from the N-terminus, the 316-residue chain is Pantothenate kinase (316 aa).

95-102 (GSVAVGKS) is an ATP binding site.

The protein belongs to the prokaryotic pantothenate kinase family.

The protein resides in the cytoplasm. The catalysed reaction is (R)-pantothenate + ATP = (R)-4'-phosphopantothenate + ADP + H(+). The protein operates within cofactor biosynthesis; coenzyme A biosynthesis; CoA from (R)-pantothenate: step 1/5. This Shewanella piezotolerans (strain WP3 / JCM 13877) protein is Pantothenate kinase.